Consider the following 166-residue polypeptide: Small ribosomal subunit protein uS5 (166 aa).

Residues 11–74 enclose the S5 DRBM domain; that stretch reads LQEKLIAVNR…EKARRNMMNV (64 aa).

This sequence belongs to the universal ribosomal protein uS5 family. Part of the 30S ribosomal subunit. Contacts proteins S4 and S8.

Functionally, with S4 and S12 plays an important role in translational accuracy. Its function is as follows. Located at the back of the 30S subunit body where it stabilizes the conformation of the head with respect to the body. The polypeptide is Small ribosomal subunit protein uS5 (Pectobacterium atrosepticum (strain SCRI 1043 / ATCC BAA-672) (Erwinia carotovora subsp. atroseptica)).